The following is a 207-amino-acid chain: Probable molybdenum cofactor guanylyltransferase (207 aa).

Residues 9 to 11, Lys-21, and Asp-97 contribute to the GTP site; that span reads LAG. Residue Asp-97 participates in Mg(2+) binding.

This sequence belongs to the MobA family. Requires Mg(2+) as cofactor.

It is found in the cytoplasm. It carries out the reaction Mo-molybdopterin + GTP + H(+) = Mo-molybdopterin guanine dinucleotide + diphosphate. Transfers a GMP moiety from GTP to Mo-molybdopterin (Mo-MPT) cofactor (Moco or molybdenum cofactor) to form Mo-molybdopterin guanine dinucleotide (Mo-MGD) cofactor. In Trichormus variabilis (strain ATCC 29413 / PCC 7937) (Anabaena variabilis), this protein is Probable molybdenum cofactor guanylyltransferase.